Reading from the N-terminus, the 197-residue chain is MTETFFDKPLACREIKEIPGLLEFDIPVRGDNRGWFKENFQKEKMLPIGFPERFFEEGKLQNNVSFSRQHVLRGLHAEPWDKYISVADDGKVLGAWVDLREGETFGNVYQTVIDASKGMFVPRGVANGFQVLSETVSYSYLVNDYWALDLKPKYAFVNYADPSLGITWENLAAAEVSEADKNHPLLSDVKPLKPKDL.

The active-site Proton acceptor is His-76. The Proton donor role is filled by Tyr-140.

Could catalyze a 3,5-epimerization. This chain is Protein RmlC homolog (rfbC), found in Streptococcus pyogenes serotype M6 (strain ATCC BAA-946 / MGAS10394).